The sequence spans 283 residues: Polyamine aminopropyltransferase (283 aa).

The PABS domain maps to 5–240; the sequence is NTWFTEIHQD…GWWTATMACK (236 aa). Glutamine 33 serves as a coordination point for S-methyl-5'-thioadenosine. Residues histidine 64 and aspartate 88 each contribute to the spermidine site. Residues aspartate 108 and 139 to 140 contribute to the S-methyl-5'-thioadenosine site; that span reads DG. Aspartate 158 functions as the Proton acceptor in the catalytic mechanism. 158–161 provides a ligand contact to spermidine; the sequence is DSTD. Residue proline 165 participates in S-methyl-5'-thioadenosine binding.

It belongs to the spermidine/spermine synthase family. Homodimer or homotetramer.

The protein resides in the cytoplasm. It catalyses the reaction S-adenosyl 3-(methylsulfanyl)propylamine + putrescine = S-methyl-5'-thioadenosine + spermidine + H(+). It functions in the pathway amine and polyamine biosynthesis; spermidine biosynthesis; spermidine from putrescine: step 1/1. Catalyzes the irreversible transfer of a propylamine group from the amino donor S-adenosylmethioninamine (decarboxy-AdoMet) to putrescine (1,4-diaminobutane) to yield spermidine. This Thioalkalivibrio sulfidiphilus (strain HL-EbGR7) protein is Polyamine aminopropyltransferase.